The following is a 376-amino-acid chain: Cytochrome c oxidase subunit 2, mitochondrial (376 aa).

The helical transmembrane segment at 164-184 threads the bilayer; the sequence is IFFFLVQILVFVLWVLSRALW. Residues 185 to 204 lie on the Mitochondrial matrix side of the membrane; that stretch reads CFRSKISPIPQRIVHGTTIE. The chain crosses the membrane as a helical span at residues 205-225; that stretch reads ILWTILPSIILMFIAIPSFTL. Residues 226-376 lie on the Mitochondrial intermembrane side of the membrane; sequence LYSMDDVVVD…YGSWVSNQIQ (151 aa). Histidine 309, cysteine 344, glutamate 346, cysteine 348, histidine 352, and methionine 355 together coordinate Cu cation. A Mg(2+)-binding site is contributed by glutamate 346.

Belongs to the cytochrome c oxidase subunit 2 family. Component of the cytochrome c oxidase (complex IV, CIV), a multisubunit enzyme composed of a catalytic core of 3 subunits and several supernumerary subunits. The complex exists as a monomer or a dimer and forms supercomplexes (SCs) in the inner mitochondrial membrane with ubiquinol-cytochrome c oxidoreductase (cytochrome b-c1 complex, complex III, CIII). The cofactor is Cu cation.

The protein localises to the mitochondrion inner membrane. It catalyses the reaction 4 Fe(II)-[cytochrome c] + O2 + 8 H(+)(in) = 4 Fe(III)-[cytochrome c] + 2 H2O + 4 H(+)(out). Component of the cytochrome c oxidase, the last enzyme in the mitochondrial electron transport chain which drives oxidative phosphorylation. The respiratory chain contains 3 multisubunit complexes succinate dehydrogenase (complex II, CII), ubiquinol-cytochrome c oxidoreductase (cytochrome b-c1 complex, complex III, CIII) and cytochrome c oxidase (complex IV, CIV), that cooperate to transfer electrons derived from NADH and succinate to molecular oxygen, creating an electrochemical gradient over the inner membrane that drives transmembrane transport and the ATP synthase. Cytochrome c oxidase is the component of the respiratory chain that catalyzes the reduction of oxygen to water. Electrons originating from reduced cytochrome c in the intermembrane space (IMS) are transferred via the dinuclear copper A center (CU(A)) of subunit 2 and heme A of subunit 1 to the active site in subunit 1, a binuclear center (BNC) formed by heme A3 and copper B (CU(B)). The BNC reduces molecular oxygen to 2 water molecules using 4 electrons from cytochrome c in the IMS and 4 protons from the mitochondrial matrix. The polypeptide is Cytochrome c oxidase subunit 2, mitochondrial (COX2) (Vigna unguiculata (Cowpea)).